We begin with the raw amino-acid sequence, 364 residues long: RNA polymerase II holoenzyme cyclin-like subunit (364 aa).

The region spanning 53–143 is the Cyclin N-terminal domain; that stretch reads QQINRLSKRI…VGECEFSLIS (91 aa). Positions 268-303 are disordered; the sequence is PGFGSQGSQQQAGFSQGNSQGSLQGDSAAAEPKKVT. Over residues 273–289 the composition is skewed to low complexity; it reads QGSQQQAGFSQGNSQGS.

Belongs to the cyclin family. Cyclin C subfamily. Component of the SRB8-11 complex, a regulatory module of the Mediator complex.

The protein localises to the nucleus. Its function is as follows. Component of the SRB8-11 complex. The SRB8-11 complex is a regulatory module of the Mediator complex which is itself involved in regulation of basal and activated RNA polymerase II-dependent transcription. The SRB8-11 complex may be involved in the transcriptional repression of a subset of genes regulated by Mediator. It may inhibit the association of the Mediator complex with RNA polymerase II to form the holoenzyme complex. The SRB8-11 complex phosphorylates the C-terminal domain (CTD) of the largest subunit of RNA polymerase II. The polypeptide is RNA polymerase II holoenzyme cyclin-like subunit (SSN8) (Chaetomium globosum (strain ATCC 6205 / CBS 148.51 / DSM 1962 / NBRC 6347 / NRRL 1970) (Soil fungus)).